The following is a 576-amino-acid chain: Lysine--tRNA ligase, mitochondrial (576 aa).

The N-terminal 30 residues, 1–30, are a transit peptide targeting the mitochondrion; sequence MNVLLKRRSLTFAPRWLWCKCRSSRSRPYS.

It belongs to the class-II aminoacyl-tRNA synthetase family.

Its subcellular location is the mitochondrion matrix. The catalysed reaction is tRNA(Lys) + L-lysine + ATP = L-lysyl-tRNA(Lys) + AMP + diphosphate. Catalyzes the attachment of lysine to tRNA(Lys) in the mitochondrion. This chain is Lysine--tRNA ligase, mitochondrial (MSK1), found in Saccharomyces cerevisiae (strain ATCC 204508 / S288c) (Baker's yeast).